Consider the following 183-residue polypeptide: Peptide deformylase (183 aa).

Fe cation-binding residues include Cys-110 and His-153. The active site involves Glu-154. His-157 contributes to the Fe cation binding site.

It belongs to the polypeptide deformylase family. Requires Fe(2+) as cofactor.

It carries out the reaction N-terminal N-formyl-L-methionyl-[peptide] + H2O = N-terminal L-methionyl-[peptide] + formate. Its function is as follows. Removes the formyl group from the N-terminal Met of newly synthesized proteins. Requires at least a dipeptide for an efficient rate of reaction. N-terminal L-methionine is a prerequisite for activity but the enzyme has broad specificity at other positions. In Listeria monocytogenes serovar 1/2a (strain ATCC BAA-679 / EGD-e), this protein is Peptide deformylase.